Here is a 168-residue protein sequence, read N- to C-terminus: Nucleoside deoxyribosyltransferase (168 aa).

Residue Glu-103 is the Nucleophile of the active site.

Belongs to the nucleoside deoxyribosyltransferase family.

It carries out the reaction 2-deoxy-D-ribosyl-base(1) + base(2) = 2-deoxy-D-ribosyl-base(2) + base(1).. It participates in nucleotide metabolism; nucleotide salvage pathway. Its function is as follows. Catalyzes the cleavage of the glycosidic bond of 2'-deoxyribonucleosides and the transfer of the deoxyribosyl moiety to an acceptor purine or pyrimidine base. The sequence is that of Nucleoside deoxyribosyltransferase (ntd) from Limosilactobacillus fermentum (Lactobacillus fermentum).